Here is a 545-residue protein sequence, read N- to C-terminus: Chaperonin GroEL (545 aa).

ATP contacts are provided by residues 29-32 (TMGP), K50, 86-90 (DGTTT), G414, 477-479 (DAA), and D493.

This sequence belongs to the chaperonin (HSP60) family. Forms a cylinder of 14 subunits composed of two heptameric rings stacked back-to-back. Interacts with the co-chaperonin GroES.

It is found in the cytoplasm. The catalysed reaction is ATP + H2O + a folded polypeptide = ADP + phosphate + an unfolded polypeptide.. Functionally, together with its co-chaperonin GroES, plays an essential role in assisting protein folding. The GroEL-GroES system forms a nano-cage that allows encapsulation of the non-native substrate proteins and provides a physical environment optimized to promote and accelerate protein folding. The chain is Chaperonin GroEL from Campylobacter jejuni subsp. jejuni serotype O:6 (strain 81116 / NCTC 11828).